The chain runs to 346 residues: Flap endonuclease 1 (346 aa).

Residues 1-102 (MGVTELGKLI…AEIEERRKAK (102 aa)) form an N-domain region. Asp31, Asp84, Glu156, Glu158, Asp177, Asp179, and Asp239 together coordinate Mg(2+). Residues 120 to 261 (EVAKYAKRAI…RALKLIWEFG (142 aa)) are I-domain.

Belongs to the XPG/RAD2 endonuclease family. FEN1 subfamily. Interacts with PCNA. PCNA stimulates the nuclease activity without altering cleavage specificity. Requires Mg(2+) as cofactor.

Functionally, structure-specific nuclease with 5'-flap endonuclease and 5'-3' exonuclease activities involved in DNA replication and repair. During DNA replication, cleaves the 5'-overhanging flap structure that is generated by displacement synthesis when DNA polymerase encounters the 5'-end of a downstream Okazaki fragment. Binds the unpaired 3'-DNA end and kinks the DNA to facilitate 5' cleavage specificity. Cleaves one nucleotide into the double-stranded DNA from the junction in flap DNA, leaving a nick for ligation. Also involved in the base excision repair (BER) pathway. Acts as a genome stabilization factor that prevents flaps from equilibrating into structures that lead to duplications and deletions. Also possesses 5'-3' exonuclease activity on nicked or gapped double-stranded DNA. The sequence is that of Flap endonuclease 1 from Pyrobaculum arsenaticum (strain DSM 13514 / JCM 11321 / PZ6).